The chain runs to 261 residues: Cytochrome c oxidase subunit 3 (261 aa).

Residues 1-15 (MAHQAHAYHMVDPSP) are Mitochondrial matrix-facing. The chain crosses the membrane as a helical span at residues 16–34 (WPLTGAVAALLLTSGLAVW). At 35 to 40 (FHFKSL) the chain is on the mitochondrial intermembrane side. The chain crosses the membrane as a helical span at residues 41 to 66 (TLLAMGLLLMILTMIQWWRDIIREGT). The Mitochondrial matrix segment spans residues 67-72 (FQGHHT). Residues 73-105 (PPVQKGLRYGMILFITSEVFFFLGFFWAFYHSS) traverse the membrane as a helical segment. Over 106-128 (LAPTPELGGIWPPTGITPLDPFE) the chain is Mitochondrial intermembrane. The helical transmembrane segment at 129-152 (VPLLNTAVLLASGVTVTWTHHSLM) threads the bilayer. Over 153–155 (EGK) the chain is Mitochondrial matrix. A helical membrane pass occupies residues 156-183 (RTEATQALTLTILLGLYFTALQAMEYYE). At 184 to 190 (APFTIAD) the chain is on the mitochondrial intermembrane side. Residues 191–223 (GVYGTTFFVATGFHGLHVIIGSTFLAGCLLRQI) traverse the membrane as a helical segment. At 224-232 (LYHFTSSHH) the chain is on the mitochondrial matrix side. A helical transmembrane segment spans residues 233 to 256 (FGFEAAAWYWHFVDVVWLFLYVSI). Topologically, residues 257–261 (YWWGS) are mitochondrial intermembrane.

The protein belongs to the cytochrome c oxidase subunit 3 family. Component of the cytochrome c oxidase (complex IV, CIV), a multisubunit enzyme composed of 14 subunits. The complex is composed of a catalytic core of 3 subunits MT-CO1, MT-CO2 and MT-CO3, encoded in the mitochondrial DNA, and 11 supernumerary subunits COX4I, COX5A, COX5B, COX6A, COX6B, COX6C, COX7A, COX7B, COX7C, COX8 and NDUFA4, which are encoded in the nuclear genome. The complex exists as a monomer or a dimer and forms supercomplexes (SCs) in the inner mitochondrial membrane with NADH-ubiquinone oxidoreductase (complex I, CI) and ubiquinol-cytochrome c oxidoreductase (cytochrome b-c1 complex, complex III, CIII), resulting in different assemblies (supercomplex SCI(1)III(2)IV(1) and megacomplex MCI(2)III(2)IV(2)).

The protein localises to the mitochondrion inner membrane. The catalysed reaction is 4 Fe(II)-[cytochrome c] + O2 + 8 H(+)(in) = 4 Fe(III)-[cytochrome c] + 2 H2O + 4 H(+)(out). In terms of biological role, component of the cytochrome c oxidase, the last enzyme in the mitochondrial electron transport chain which drives oxidative phosphorylation. The respiratory chain contains 3 multisubunit complexes succinate dehydrogenase (complex II, CII), ubiquinol-cytochrome c oxidoreductase (cytochrome b-c1 complex, complex III, CIII) and cytochrome c oxidase (complex IV, CIV), that cooperate to transfer electrons derived from NADH and succinate to molecular oxygen, creating an electrochemical gradient over the inner membrane that drives transmembrane transport and the ATP synthase. Cytochrome c oxidase is the component of the respiratory chain that catalyzes the reduction of oxygen to water. Electrons originating from reduced cytochrome c in the intermembrane space (IMS) are transferred via the dinuclear copper A center (CU(A)) of subunit 2 and heme A of subunit 1 to the active site in subunit 1, a binuclear center (BNC) formed by heme A3 and copper B (CU(B)). The BNC reduces molecular oxygen to 2 water molecules using 4 electrons from cytochrome c in the IMS and 4 protons from the mitochondrial matrix. The polypeptide is Cytochrome c oxidase subunit 3 (mt-co3) (Polypterus ornatipinnis (Ornate bichir)).